The primary structure comprises 372 residues: Maltose/maltodextrin import ATP-binding protein MalK (372 aa).

Residues 4–234 (VSLRNVGKSY…PANRFVAGFI (231 aa)) form the ABC transporter domain. 36–43 (GPSGCGKS) serves as a coordination point for ATP.

It belongs to the ABC transporter superfamily. Maltooligosaccharide importer (TC 3.A.1.1.1) family. As to quaternary structure, the complex is composed of two ATP-binding proteins (MalK), two transmembrane proteins (MalG and MalK) and a solute-binding protein (MalE).

It is found in the cell inner membrane. It carries out the reaction D-maltose(out) + ATP + H2O = D-maltose(in) + ADP + phosphate + H(+). Part of the ABC transporter complex MalEFGK involved in maltose/maltodextrin import. Responsible for energy coupling to the transport system. This Mannheimia succiniciproducens (strain KCTC 0769BP / MBEL55E) protein is Maltose/maltodextrin import ATP-binding protein MalK.